The primary structure comprises 635 residues: tRNA uridine 5-carboxymethylaminomethyl modification enzyme MnmG (635 aa).

15–20 (GAGHAG) lines the FAD pocket. NAD(+) is bound at residue 276–290 (GPRYCPSIEDKIVRF).

It belongs to the MnmG family. Homodimer. Heterotetramer of two MnmE and two MnmG subunits. FAD is required as a cofactor.

The protein localises to the cytoplasm. In terms of biological role, NAD-binding protein involved in the addition of a carboxymethylaminomethyl (cmnm) group at the wobble position (U34) of certain tRNAs, forming tRNA-cmnm(5)s(2)U34. The polypeptide is tRNA uridine 5-carboxymethylaminomethyl modification enzyme MnmG (Streptococcus sanguinis (strain SK36)).